The primary structure comprises 109 residues: Mitochondrial pyruvate carrier 1 (109 aa).

N-acetylalanine is present on Ala2. Over 2–20 (AGALVRKAADYVRSKDFRD) the chain is Mitochondrial matrix. A helical transmembrane segment spans residues 21-41 (YLMSTHFWGPVANWGLPIAAI). Residues 42-52 (NDMKKSPEIIS) are Mitochondrial intermembrane-facing. Residues 53–71 (GRMTFALCCYSLTFMRFAY) traverse the membrane as a helical segment. At Lys72 the chain carries N6-acetyllysine. Residues 72–109 (KVQPRNWLLFACHATNEVAQLIQGGRLIKHEMTKTASA) are Mitochondrial matrix-facing.

This sequence belongs to the mitochondrial pyruvate carrier (MPC) (TC 2.A.105) family. As to quaternary structure, homodimer. Forms heterodimer with MPC2. The heterodimer is the more stable and dominant form.

Its subcellular location is the mitochondrion inner membrane. The enzyme catalyses pyruvate(out) + H(+)(out) = pyruvate(in) + H(+)(in). Its function is as follows. Mediates the uptake of pyruvate into mitochondria. This chain is Mitochondrial pyruvate carrier 1 (MPC1), found in Homo sapiens (Human).